The primary structure comprises 254 residues: Pyridoxine 5'-phosphate synthase (254 aa).

Residue N12 participates in 3-amino-2-oxopropyl phosphate binding. 1-deoxy-D-xylulose 5-phosphate is bound at residue 14-15; that stretch reads DH. R23 provides a ligand contact to 3-amino-2-oxopropyl phosphate. H48 serves as the catalytic Proton acceptor. Residues R50 and H55 each coordinate 1-deoxy-D-xylulose 5-phosphate. The active-site Proton acceptor is E75. Position 105 (T105) interacts with 1-deoxy-D-xylulose 5-phosphate. The Proton donor role is filled by H199. 3-amino-2-oxopropyl phosphate-binding positions include G200 and 221-222; that span reads GF.

It belongs to the PNP synthase family. As to quaternary structure, homooctamer; tetramer of dimers.

The protein localises to the cytoplasm. The enzyme catalyses 3-amino-2-oxopropyl phosphate + 1-deoxy-D-xylulose 5-phosphate = pyridoxine 5'-phosphate + phosphate + 2 H2O + H(+). It participates in cofactor biosynthesis; pyridoxine 5'-phosphate biosynthesis; pyridoxine 5'-phosphate from D-erythrose 4-phosphate: step 5/5. Functionally, catalyzes the complicated ring closure reaction between the two acyclic compounds 1-deoxy-D-xylulose-5-phosphate (DXP) and 3-amino-2-oxopropyl phosphate (1-amino-acetone-3-phosphate or AAP) to form pyridoxine 5'-phosphate (PNP) and inorganic phosphate. The polypeptide is Pyridoxine 5'-phosphate synthase (Rhodopseudomonas palustris (strain ATCC BAA-98 / CGA009)).